The following is a 175-amino-acid chain: Nucleoside-triphosphatase THEP1 (175 aa).

Residues 16–23 (GMPGVGKT) and 103–110 (VAFIDEIG) each bind ATP.

Belongs to the THEP1 NTPase family.

It catalyses the reaction a ribonucleoside 5'-triphosphate + H2O = a ribonucleoside 5'-diphosphate + phosphate + H(+). Its function is as follows. Has nucleotide phosphatase activity towards ATP, GTP, CTP, TTP and UTP. May hydrolyze nucleoside diphosphates with lower efficiency. The chain is Nucleoside-triphosphatase THEP1 from Pyrobaculum calidifontis (strain DSM 21063 / JCM 11548 / VA1).